A 161-amino-acid polypeptide reads, in one-letter code: uncharacterized protein (161 aa).

This is an uncharacterized protein from Homo sapiens (Human).